Reading from the N-terminus, the 149-residue chain is Large ribosomal subunit protein uL13 (149 aa).

The protein belongs to the universal ribosomal protein uL13 family. In terms of assembly, part of the 50S ribosomal subunit.

Functionally, this protein is one of the early assembly proteins of the 50S ribosomal subunit, although it is not seen to bind rRNA by itself. It is important during the early stages of 50S assembly. The chain is Large ribosomal subunit protein uL13 from Bifidobacterium longum (strain DJO10A).